The primary structure comprises 882 residues: Translation initiation factor IF-2 (882 aa).

Residues 57 to 211 (YIPANKTKDK…KDKSKPKVAT (155 aa)) are disordered. Basic and acidic residues predominate over residues 104–115 (TTSEKQKDKGEQ). The span at 199 to 211 (RHKKDKSKPKVAT) shows a compositional bias: basic residues. A tr-type G domain is found at 381–550 (ERPPVVTIMG…LIQAEVLELK (170 aa)). Positions 390–397 (GHVDHGKT) are G1. 390 to 397 (GHVDHGKT) contributes to the GTP binding site. Positions 415–419 (GITQH) are G2. Residues 436 to 439 (DTPG) form a G3 region. GTP contacts are provided by residues 436–440 (DTPGH) and 490–493 (NKMD). The segment at 490-493 (NKMD) is G4. The interval 526 to 528 (SAK) is G5.

This sequence belongs to the TRAFAC class translation factor GTPase superfamily. Classic translation factor GTPase family. IF-2 subfamily.

Its subcellular location is the cytoplasm. Its function is as follows. One of the essential components for the initiation of protein synthesis. Protects formylmethionyl-tRNA from spontaneous hydrolysis and promotes its binding to the 30S ribosomal subunits. Also involved in the hydrolysis of GTP during the formation of the 70S ribosomal complex. This chain is Translation initiation factor IF-2, found in Helicobacter hepaticus (strain ATCC 51449 / 3B1).